The sequence spans 383 residues: MHC class I polypeptide-related sequence A (383 aa).

An N-terminal signal peptide occupies residues 1-23 (MGLGPVFLLLAGIFPFAPPGAAA). At 24 to 307 (EPHSLRYNLT…GKVLVLQSHW (284 aa)) the chain is on the extracellular side. Asparagine 31 is a glycosylation site (N-linked (GlcNAc...) asparagine). Cysteine 59 and cysteine 64 are joined by a disulfide. Asparagine 79 is a glycosylation site (N-linked (GlcNAc...) asparagine). Cysteine 119 and cysteine 187 are disulfide-bonded. Residues 207 to 296 (PMVNVTRSEA…SGNHSTHPVP (90 aa)) form the Ig-like C1-type domain. Asparagine 210, asparagine 220, and asparagine 261 each carry an N-linked (GlcNAc...) asparagine glycan. Residues cysteine 225 and cysteine 282 are joined by a disulfide bond. The helical transmembrane segment at 308–328 (QTFHVSAVAAAAIFVIIIFYV) threads the bilayer. Residues 329–383 (RCCKKKTSAAEGPELVSLQVLDQHPVGTSDHRDATQLGFQPLMSDLGSTGSTEGA) are Cytoplasmic-facing. 2 S-palmitoyl cysteine lipidation sites follow: cysteine 330 and cysteine 331.

It belongs to the MHC class I family. MIC subfamily. As to quaternary structure, unlike classical MHC class I molecules, does not form a heterodimer with beta-2-microglobulin. Binds as a monomer to a KLRK1/NKG2D homodimer. KLRK1 forms a complex with HCST/DAP10 in which KLRK1 binds MICA while HCST acts as an adapter molecule which enables signal transduction. Interacts with PDIA6 on the surface of tumor cells, leading to disulfide bond reduction which is required for release of MICA from tumor cells. (Microbial infection) Interacts with human cytomegalovirus/HHV-5 protein UL142. Post-translationally, N-glycosylated. Glycosylation is not essential for interaction with KLRK1/NKG2D but enhances complex formation. Proteolytically cleaved and released from the cell surface of tumor cells which impairs KLRK1/NKG2D expression and T-cell activation. In terms of processing, palmitoylated on cysteine residues in the cytoplasmic tail leading to its association with membrane microdomains enriched in cholesterol. Post-translationally, N-glycosylation is necessary for cell surface expression. (Microbial infection) Ubiquitinated by human herpesvirus 8 protein K5, leading to degradation. In terms of tissue distribution, widely expressed with the exception of the central nervous system where it is absent. Expressed predominantly in gastric epithelium and also in monocytes, keratinocytes, endothelial cells, fibroblasts and in the outer layer of Hassal's corpuscles within the medulla of normal thymus. In skin, expressed mainly in the keratin layers, basal cells, ducts and follicles. Also expressed in many, but not all, epithelial tumors of lung, breast, kidney, ovary, prostate and colon. In thyomas, overexpressed in cortical and medullar epithelial cells. Tumors expressing MICA display increased levels of gamma delta T-cells.

Its subcellular location is the cell membrane. The protein resides in the cytoplasm. Functionally, widely expressed membrane-bound protein which acts as a ligand to stimulate an activating receptor KLRK1/NKG2D, expressed on the surface of essentially all human natural killer (NK), gammadelta T and CD8 alphabeta T-cells. Up-regulated in stressed conditions, such as viral and bacterial infections or DNA damage response, serves as signal of cellular stress, and engagement of KLRK1/NKG2D by MICA triggers NK-cells resulting in a range of immune effector functions, such as cytotoxicity and cytokine production. This is MHC class I polypeptide-related sequence A from Homo sapiens (Human).